We begin with the raw amino-acid sequence, 722 residues long: Nucleolar protein 10 (722 aa).

WD repeat units lie at residues E50–E90, T174–A213, E228–V266, Y270–S308, and E310–R349. Coiled-coil stretches lie at residues E423–A476 and S511–E534. Disordered regions lie at residues L521–Q555, S572–Y607, R616–R635, and T664–F722. The segment covering E523–E534 has biased composition (acidic residues). Positions S572 to T586 are enriched in basic and acidic residues. Over residues R587 to G600 the composition is skewed to polar residues. A coiled-coil region spans residues D620–R681. Residues T664–R682 show a composition bias toward basic and acidic residues. Composition is skewed to basic residues over residues R683–S693 and G702–F722.

Belongs to the WD repeat NOL10/ENP2 family.

It is found in the nucleus. The protein localises to the nucleolus. The protein is Nucleolar protein 10 (nol10) of Danio rerio (Zebrafish).